The sequence spans 446 residues: Glucose transporter GlcP (446 aa).

Over 1-6 (MKANKY) the chain is Cytoplasmic. Residues 7-31 (LIFILGALGGLLYGYDNGVISGALL) traverse the membrane as a helical segment. The Extracellular portion of the chain corresponds to 32 to 38 (FIHKDIP). A helical transmembrane segment spans residues 39 to 64 (LNSTTEGIVVSSMLIGAIVGAGSSGP). At 65–70 (LADKLG) the chain is on the cytoplasmic side. The helical transmembrane segment at 71–90 (RRRLVMLIAIVFIIGALILA) threads the bilayer. Over 91-94 (ASTN) the chain is Extracellular. The helical transmembrane segment at 95-122 (LALLIIGRLIIGLAVGGSMSTVPVYLSE) threads the bilayer. Residues 123–129 (MAPTEYR) are Cytoplasmic-facing. The chain crosses the membrane as a helical span at residues 130–152 (GSLGSLNQLMITIGILAAYLVNY). The Extracellular portion of the chain corresponds to 153–154 (AF). The chain crosses the membrane as a helical span at residues 155–180 (ADIEGWRWMLGLAVVPSVILLVGIYF). Topologically, residues 181–234 (MPESPRWLLENRNEEAARQVMKITYDDSEIDKELKEMKEINAISESTWTVIKSP) are cytoplasmic. The helical transmembrane segment at 235–269 (WLGRILIVGCIFAIFQQFIGINAVIFYSSSIFAKA) threads the bilayer. Topologically, residues 270-272 (GLG) are extracellular. The chain crosses the membrane as a helical span at residues 273 to 295 (EAASILGSVGIGTINVLVTIVAI). Residues 296–303 (FVVDKIDR) lie on the Cytoplasmic side of the membrane. Residues 304-324 (KKLLVGGNIGMIASLLIMAIL) form a helical membrane-spanning segment. The Extracellular portion of the chain corresponds to 325 to 329 (IWTIG). Residues 330–363 (IASSAWIIIVCLSLFIVFFGISWGPVLWVMLPEL) form a helical membrane-spanning segment. Topologically, residues 364–370 (FPMRARG) are cytoplasmic. A helical transmembrane segment spans residues 371–399 (AATGISALVLNIGTLIVSLFFPILSDALS). Residues 400–401 (TE) are Extracellular-facing. The chain crosses the membrane as a helical span at residues 402–420 (WVFLIFAFIGVLAMIFVIK). At 421-446 (FLPETRGRSLEEIEYELRERTGARTE) the chain is on the cytoplasmic side.

This sequence belongs to the major facilitator superfamily. Sugar transporter (TC 2.A.1.1) family.

The protein localises to the cell membrane. Inhibited by carbonyl cyanide m-chlorophenylhydrazone (CCCP) and by the human glucose transport inhibitors cytochalasin B, phloretin, and forskolin. In terms of biological role, transporter highly specific for glucose uptake. This Staphylococcus epidermidis (strain ATCC 12228 / FDA PCI 1200) protein is Glucose transporter GlcP.